The following is a 199-amino-acid chain: Recombination protein RecR (199 aa).

Residues 58–73 form a C4-type zinc finger; it reads CSVCTNLTDRDPCRIC. In terms of domain architecture, Toprim spans 81 to 176; that stretch reads AVICVVEEPR…KVTRIAHGLP (96 aa).

The protein belongs to the RecR family.

Functionally, may play a role in DNA repair. It seems to be involved in an RecBC-independent recombinational process of DNA repair. It may act with RecF and RecO. This chain is Recombination protein RecR, found in Heliobacterium modesticaldum (strain ATCC 51547 / Ice1).